Reading from the N-terminus, the 247-residue chain is Caffeoyl-CoA O-methyltransferase 2 (247 aa).

Lys21 contributes to the substrate binding site. Residues Thr63, Glu85, 87–88, Ser93, Asp111, and Ala140 contribute to the S-adenosyl-L-methionine site; that span reads GV. Residue Asp163 participates in substrate binding. Asp163 is an a divalent metal cation binding site. Residue Asp165 coordinates S-adenosyl-L-methionine. A divalent metal cation is bound by residues Asp189 and Asn190. Residue Asn194 coordinates substrate.

The protein belongs to the class I-like SAM-binding methyltransferase superfamily. Cation-dependent O-methyltransferase family. CCoAMT subfamily. Requires a divalent metal cation as cofactor.

It carries out the reaction (E)-caffeoyl-CoA + S-adenosyl-L-methionine = (E)-feruloyl-CoA + S-adenosyl-L-homocysteine + H(+). It participates in aromatic compound metabolism; phenylpropanoid biosynthesis. Methylates caffeoyl-CoA to feruloyl-CoA and 5-hydroxyferuloyl-CoA to sinapoyl-CoA. Plays a role in the synthesis of feruloylated polysaccharides. Involved in the reinforcement of the plant cell wall. Also involved in the responding to wounding or pathogen challenge by the increased formation of cell wall-bound ferulic acid polymers. This chain is Caffeoyl-CoA O-methyltransferase 2 (CCOAOMT2), found in Populus trichocarpa (Western balsam poplar).